The sequence spans 606 residues: Mannan endo-1,4-beta-mannosidase A (606 aa).

An N-terminal signal peptide occupies residues 1 to 19 (MKSLNVILTLLSLIISVLS). Positions 22-140 (VYYEAEDGKL…WMWVDAFVIN (119 aa)) constitute a CBM6 domain. Residues 164–458 (PAAKKLYDFL…FNHKTVMNMD (295 aa)) enclose the GH26 domain. Substrate is bound at residue tryptophan 285. Catalysis depends on glutamate 318, which acts as the Proton donor. Substrate-binding residues include tryptophan 323 and tyrosine 378. Glutamate 406 functions as the Nucleophile in the catalytic mechanism. The segment at 472–489 (SGSSHNGNSESNSNTGNS) is linker. CBM10 domains are found at residues 491 to 527 (ECWS…CGIV), 530 to 566 (SCWS…CGIV), and 569 to 605 (SCWA…CGIL). Tryptophan 493 contributes to the substrate binding site.

It belongs to the glycosyl hydrolase 26 family.

The enzyme catalyses Random hydrolysis of (1-&gt;4)-beta-D-mannosidic linkages in mannans, galactomannans and glucomannans.. Hydrolyzes 1,4-beta linked polysaccharide backbones of mannans, one of the major hemicellulose components in hardwoods and softwoods. Shows very high activity against mannohexaose but not against mannopentaose and smaller mannooligosaccharides. The major products released from mannooligosaccharide hydrolysis are mannose and mannobiose. The reiterated 40 AA domain is involved in binding the cellulase-hemicellulase complex. In Piromyces sp, this protein is Mannan endo-1,4-beta-mannosidase A (MANA).